A 353-amino-acid polypeptide reads, in one-letter code: NADH-quinone oxidoreductase subunit H (353 aa).

9 helical membrane-spanning segments follow: residues 8–28 (LLVY…IFIW), 75–95 (GVFW…FAAI), 108–128 (IGIL…FMAG), 148–168 (VSYE…TGSL), 179–199 (VPFI…AMAE), 229–249 (LFYL…TTLF), 258–278 (LHPV…IIWV), 297–317 (FLLP…LIAP), and 319–339 (INTA…VLLF).

It belongs to the complex I subunit 1 family. In terms of assembly, NDH-1 is composed of 14 different subunits. Subunits NuoA, H, J, K, L, M, N constitute the membrane sector of the complex.

The protein localises to the cell membrane. The enzyme catalyses a quinone + NADH + 5 H(+)(in) = a quinol + NAD(+) + 4 H(+)(out). In terms of biological role, NDH-1 shuttles electrons from NADH, via FMN and iron-sulfur (Fe-S) centers, to quinones in the respiratory chain. The immediate electron acceptor for the enzyme in this species is believed to be ubiquinone. Couples the redox reaction to proton translocation (for every two electrons transferred, four hydrogen ions are translocated across the cytoplasmic membrane), and thus conserves the redox energy in a proton gradient. This subunit may bind ubiquinone. The polypeptide is NADH-quinone oxidoreductase subunit H (Dehalococcoides mccartyi (strain CBDB1)).